A 505-amino-acid polypeptide reads, in one-letter code: MAQIDFRKKINWHRRYRSPQGVKTEHEILRIFESDRGRIINSPAIRRLQQKTQVFPLERNAAVRTRLTHSMEVQQVGRYIAKEILSRLKELKLLEAYGLDELTGPFESIVEMSCLMHDIGNPPFGHFGEAAINDWFRQRLHPEDAESQPLTDDRCSVAALRLRDGEEPLNELRRKIRQDLCHFEGNAQGIRLVHTLMRMNLTWAQVGGILKYTRPAWWRGETPETHHYLMKKPGYYLSEEAYIARLRKELNLALYSRFPLTWIMEAADDISYCVADLEDAVEKRIFTVEQLYHHLHEAWGQHEKGSLFSLVVENAWEKSRSNSLSRSTEDQFFMYLRVNTLNKLVPYAAQRFIDNLPAIFAGTFNHALLEDASECSDLLKLYKNVAVKHVFSHPDVEQLELQGYRVISGLLEIYRPLLSLSLSDFTELVEKERVKRFPIESRLFHKLSTRHRLAYVEAGSKLPSDSPEFPLWEYYYRCRLLQDYISGMTDLYAWDEYRRLMAVEQ.

The 208-residue stretch at 66–273 (RLTHSMEVQQ…MEAADDISYC (208 aa)) folds into the HD domain.

It belongs to the dGTPase family. Type 1 subfamily. Homotetramer. Mg(2+) serves as cofactor.

It carries out the reaction dGTP + H2O = 2'-deoxyguanosine + triphosphate + H(+). DGTPase preferentially hydrolyzes dGTP over the other canonical NTPs. The chain is Deoxyguanosinetriphosphate triphosphohydrolase from Shigella flexneri.